A 219-amino-acid polypeptide reads, in one-letter code: Proteasome subunit beta type-9 (219 aa).

A propeptide spans 1 to 20 (removed in mature form); that stretch reads MLRAGAPTAGSFRTKEVHTG. The Nucleophile role is filled by T21. K53 and K109 each carry N6-acetyllysine.

The protein belongs to the peptidase T1B family. The 26S proteasome consists of a 20S proteasome core and two 19S regulatory subunits. The 20S proteasome core is composed of 28 subunits that are arranged in four stacked rings, resulting in a barrel-shaped structure. The two end rings are each formed by seven alpha subunits, and the two central rings are each formed by seven beta subunits. The catalytic chamber with the active sites is on the inside of the barrel. Component of the immunoproteasome, where it displaces the equivalent housekeeping subunit PSMB6. Component of the spermatoproteasome, a form of the proteasome specifically found in testis. In terms of processing, autocleaved. The resulting N-terminal Thr residue of the mature subunit is responsible for the nucleophile proteolytic activity.

The protein resides in the cytoplasm. It localises to the nucleus. It catalyses the reaction Cleavage of peptide bonds with very broad specificity.. Functionally, the proteasome is a multicatalytic proteinase complex which is characterized by its ability to cleave peptides with Arg, Phe, Tyr, Leu, and Glu adjacent to the leaving group at neutral or slightly basic pH. The proteasome has an ATP-dependent proteolytic activity. This subunit is involved in antigen processing to generate class I binding peptides. This chain is Proteasome subunit beta type-9 (Psmb9), found in Mus platythrix (Flat-haired mouse).